The following is a 280-amino-acid chain: Protein YIP4b (280 aa).

Polar residues predominate over residues 1-15; that stretch reads MSHNDTIPLYQSSQS. The segment at 1-106 is disordered; sequence MSHNDTIPLY…SGFGSPPNTL (106 aa). The Cytoplasmic segment spans residues 1–146; the sequence is MSHNDTIPLY…DPGKALRDWD (146 aa). A helical transmembrane segment spans residues 147–167; sequence LWGPFFFIVFLGLTLSWSASV. Residues 168-171 lie on the Lumenal side of the membrane; it reads KKSE. 2 consecutive transmembrane segments (helical) span residues 172-192 and 193-213; these read VFAV…LNVL and LLGG…CLFP. At 214–230 the chain is on the lumenal side; sequence LDVGAVICMLKDNVILK. The helical transmembrane segment at 231-251 threads the bilayer; sequence MVVVSVTLAWSSWAAYPFMSA. The Cytoplasmic portion of the chain corresponds to 252–258; the sequence is AVNPRRK. Residues 259–279 form a helical membrane-spanning segment; that stretch reads ALALYPVFLMYVSVGFLIIAI. Position 280 (N280) is a topological domain, lumenal.

This sequence belongs to the YIP1 family. In terms of assembly, homodimer and heterodimer with YIP4A. Component of a trans-Golgi network (TGN)-localized ECH/YIP4 complex made of ECH, YIP4A and YIP4B. Interacts directly with ECH. Expressed in developing root hair cells.

Its subcellular location is the golgi apparatus. The protein resides in the trans-Golgi network membrane. Functionally, together with YIP4A, involved in the regulation of cell elongation during root and hypocotyl growth. YIP4A and YIP4B are central trafficking components in Rho-of-plant (ROPs, e.g. ARAC4/ROP2, ARAC5/ROP4 and ARAC3/ROP6) small GTPases-dependent root hair formation, thus contributing to activation and plasma membrane accumulation of ROPs during hair initiation. The ECH/YIP4 complex is involved in the modulation of the trans-Golgi network (TGN)-mediated trafficking of some proteins and cell wall components (e.g. pectin and hemicellulose) to the cell wall in dark-grown hypocotyls and in secretory cells of the seed coat. In Arabidopsis thaliana (Mouse-ear cress), this protein is Protein YIP4b.